The sequence spans 123 residues: Sperm-associated antigen 11A (123 aa).

The first 25 residues, 1 to 25 (MRQRLLPSVTSLLLVALLFPGSSQA), serve as a signal peptide directing secretion. Asn-29 is a glycosylation site (N-linked (GlcNAc...) asparagine).

It belongs to the SPAG11 family.

It localises to the secreted. Its function is as follows. Has antimicrobial activity against E.coli. Plays a role in the defense response in the male reproductive tract, contributing to sperm maturation, storage and protection. The chain is Sperm-associated antigen 11A from Homo sapiens (Human).